We begin with the raw amino-acid sequence, 75 residues long: Nigwaprin-a (75 aa).

Residues 1-24 (MSSGGLLLLLGLLTLWAELTPVSG) form the signal peptide. A WAP domain is found at 27 to 72 (RPVKPGLCPPRPQKPPCVKECKNDWSCRGEQKCCRYGCIYECRDPI). 4 disulfide bridges follow: cysteine 34–cysteine 60, cysteine 43–cysteine 64, cysteine 47–cysteine 59, and cysteine 53–cysteine 68.

The protein belongs to the venom waprin family. As to expression, expressed by the venom gland.

The protein localises to the secreted. Functionally, damages membranes of susceptible bacteria. Has no hemolytic activity. Not toxic to mice. Does not inhibit the proteinases elastase and cathepsin G. The protein is Nigwaprin-a of Cryptophis nigrescens (Eastern small-eyed snake).